The primary structure comprises 245 residues: Probable 2-phosphosulfolactate phosphatase (245 aa).

This sequence belongs to the ComB family. The cofactor is Mg(2+).

It catalyses the reaction (2R)-O-phospho-3-sulfolactate + H2O = (2R)-3-sulfolactate + phosphate. This is Probable 2-phosphosulfolactate phosphatase from Trichormus variabilis (strain ATCC 29413 / PCC 7937) (Anabaena variabilis).